A 325-amino-acid chain; its full sequence is Centromere protein O (325 aa).

The segment at 1 to 35 (MEEERNSDEKENALCGRSLTAASRDGGGRMPAAPL) is disordered. Positions 55–112 (LEMLEAQAHELGLKQEEKEQQEKKLDRLKARVQELRARRDELRAKVELQEKRLLDKEG) form a coiled coil.

Belongs to the CENP-O/MCM21 family. Component of the CENPA-HI complex, at least composed of CENPH, CENPI, CENPK, CENPL, CENPM, CENPO and CENPP. Component of a discrete complex composed of at least CENPO, CENPP, CENPQ, CENPR and CENPU.

It localises to the nucleus. The protein localises to the chromosome. It is found in the centromere. Functionally, component of the CENPA-HI complex, a centromeric complex involved in assembly of kinetochore proteins, mitotic progression and chromosome segregation. Involved in kinetochore assembly and required for recovery from spindle damage. This chain is Centromere protein O (CENPO), found in Gallus gallus (Chicken).